Here is a 1119-residue protein sequence, read N- to C-terminus: SH3 and PX domain-containing protein 2A (1119 aa).

Residues 4 to 128 (RTVLDVKVVD…RFFETKPDDI (125 aa)) enclose the PX domain. SH3 domains lie at 149 to 208 (MVLE…SQSG) and 249 to 308 (SREE…KLKD). Disordered regions lie at residues 388–429 (SSAT…PPRR), 494–595 (APSS…SNPA), 641–815 (SSDD…HESV), 914–941 (NLRSMSNPSPPIPSKPPGGFSKPTAMLN), and 957–1004 (RPQS…SSFT). One can recognise an SH3 3 domain in the interval 445–504 (TVEAEYYTIAEFQSSISDGISFRGGQKADVIEKNSGGWWYVQIGDTEGWAPSSYIDKRKK). Composition is skewed to basic and acidic residues over residues 581-590 (PKPEPRKFEI) and 688-718 (GRAERHSSKLFSDESARNPKREPVMRKDVEI). Residues 779-802 (TASVVSSEDSTSSRSTSDLSSVYS) show a composition bias toward low complexity. The segment covering 806 to 815 (RGGESDHESV) has biased composition (basic and acidic residues). The region spanning 812–871 (HESVLFRTTDAYERAQESELSFPAGVEVEVLEKQESGWWFVRWGSDEGWVPTFYLEPIKH) is the SH3 4 domain. The SH3 5 domain maps to 1058-1119 (NLREVYVSIA…VPSNYLERKK (62 aa)).

Belongs to the SH3PXD2 family. Post-translationally, tyrosine phosphorylated.

It localises to the cytoplasm. The protein resides in the cell projection. It is found in the podosome. Functionally, adapter protein involved in invadopodia and podosome formation and extracellular matrix degradation. The protein is SH3 and PX domain-containing protein 2A (sh3pxd2a) of Danio rerio (Zebrafish).